We begin with the raw amino-acid sequence, 420 residues long: Nucleobindin-2 (420 aa).

The first 24 residues, 1-24 (MRWRTILLQYCFLLITCLLTALEA), serve as a signal peptide directing secretion. A DNA-binding region spans residues 171-223 (KTRHEEFKKYEMMKEHERREYLKTLNEEKRKEEESKFEEMKKKHENHPKVNHP). The segment covering 195–212 (LNEEKRKEEESKFEEMKK) has biased composition (basic and acidic residues). Residues 195–225 (LNEEKRKEEESKFEEMKKKHENHPKVNHPGS) form a disordered region. The binds to necdin stretch occupies residues 213-420 (KHENHPKVNH…AGELKFEPHI (208 aa)). EF-hand domains lie at 241–276 (PNDF…ELEK) and 293–328 (ERLR…KEFL). Positions 254 and 256 each coordinate Ca(2+). A Phosphoserine modification is found at Ser-257. 6 residues coordinate Ca(2+): Asp-258, Glu-265, Asp-306, Asn-308, Asp-310, and Glu-317. A GBA motif is present at residues 304 to 334 (EVDTNKDRLVTLEEFLKATEKKEFLEPDSWE). A Phosphoserine modification is found at Ser-332. The segment at 398 to 420 (QKKLQQGIPPSGPAGELKFEPHI) is disordered.

This sequence belongs to the nucleobindin family. In terms of assembly, interacts (via GBA motif) with guanine nucleotide-binding protein G(i) alpha subunit GNAI3. Preferentially interacts with inactive rather than active GNAI3. Interaction with GNAI3 is inhibited when NUCB2 binds calcium, probably due to a conformational change which renders the GBA motif inaccessible. Binds to the postmitotic growth suppressor NDN; coexpression abolishes NUCB2 secretion. Interacts with MC4R. In terms of tissue distribution, predominantly expressed in spleen, testis and normal stomach.

Its subcellular location is the golgi apparatus. The protein localises to the membrane. It localises to the cytoplasm. The protein resides in the secreted. It is found in the endoplasmic reticulum. Its subcellular location is the nucleus envelope. Calcium-binding protein which may have a role in calcium homeostasis. Acts as a non-receptor guanine nucleotide exchange factor which binds to and activates guanine nucleotide-binding protein (G-protein) alpha subunit GNAI3. In terms of biological role, anorexigenic peptide, seems to play an important role in hypothalamic pathways regulating food intake and energy homeostasis, acting in a leptin-independent manner. May also exert hypertensive roles and modulate blood pressure through directly acting on peripheral arterial resistance. In intestinal epithelial cells, plays a role in the inhibition of hepatic glucose production via MC4R receptor leading to increased cyclic adenosine monophosphate (cAMP) levels and glucagon-like peptide 1 (GLP-1) secretion. The chain is Nucleobindin-2 from Homo sapiens (Human).